We begin with the raw amino-acid sequence, 371 residues long: uncharacterized protein (371 aa).

Solcar repeat units follow at residues 3 to 98, 131 to 276, and 284 to 369; these read DDSL…CKVL, RYWG…FKSF, and KSNF…VRKW. The next 6 membrane-spanning stretches (helical) occupy residues 9-29, 73-93, 137-157, 253-273, 290-310, and 341-362; these read AIAG…LDVV, GVGP…VVYE, IFSA…IWVV, LFPS…YEYF, VLAA…HEVL, and YYSG…TFLS.

Belongs to the mitochondrial carrier (TC 2.A.29) family.

Its subcellular location is the mitochondrion inner membrane. This is an uncharacterized protein from Schizosaccharomyces pombe (strain 972 / ATCC 24843) (Fission yeast).